Reading from the N-terminus, the 167-residue chain is Endoribonuclease YbeY (167 aa).

The interval 64–101 is disordered; it reads GKPTNVLSWPSEERASEEPGMAPEPPEPGDPEDPEPLG. Residues 90 to 99 show a composition bias toward acidic residues; it reads EPGDPEDPEP. Zn(2+) is bound by residues His131, His135, and His141.

It belongs to the endoribonuclease YbeY family. The cofactor is Zn(2+).

It localises to the cytoplasm. Single strand-specific metallo-endoribonuclease involved in late-stage 70S ribosome quality control and in maturation of the 3' terminus of the 16S rRNA. This chain is Endoribonuclease YbeY, found in Cereibacter sphaeroides (strain ATCC 17023 / DSM 158 / JCM 6121 / CCUG 31486 / LMG 2827 / NBRC 12203 / NCIMB 8253 / ATH 2.4.1.) (Rhodobacter sphaeroides).